A 454-amino-acid polypeptide reads, in one-letter code: tRNA(Ile)-lysidine synthase (454 aa).

Ser-31 to Ser-36 is an ATP binding site.

The protein belongs to the tRNA(Ile)-lysidine synthase family.

It is found in the cytoplasm. It carries out the reaction cytidine(34) in tRNA(Ile2) + L-lysine + ATP = lysidine(34) in tRNA(Ile2) + AMP + diphosphate + H(+). Ligates lysine onto the cytidine present at position 34 of the AUA codon-specific tRNA(Ile) that contains the anticodon CAU, in an ATP-dependent manner. Cytidine is converted to lysidine, thus changing the amino acid specificity of the tRNA from methionine to isoleucine. The chain is tRNA(Ile)-lysidine synthase from Porphyromonas gingivalis (strain ATCC BAA-308 / W83).